The sequence spans 605 residues: Aspartate--tRNA(Asp/Asn) ligase (605 aa).

An L-aspartate-binding site is contributed by E183. The interval 207 to 210 is aspartate; it reads QLFK. Residue R229 coordinates L-aspartate. Residues 229–231 and Q238 each bind ATP; that span reads RDE. H457 serves as a coordination point for L-aspartate. ATP is bound at residue E497. Residue R504 participates in L-aspartate binding. Residue 549–552 participates in ATP binding; the sequence is GLDR.

The protein belongs to the class-II aminoacyl-tRNA synthetase family. Type 1 subfamily. Homodimer.

It is found in the cytoplasm. The catalysed reaction is tRNA(Asx) + L-aspartate + ATP = L-aspartyl-tRNA(Asx) + AMP + diphosphate. Its function is as follows. Aspartyl-tRNA synthetase with relaxed tRNA specificity since it is able to aspartylate not only its cognate tRNA(Asp) but also tRNA(Asn). Reaction proceeds in two steps: L-aspartate is first activated by ATP to form Asp-AMP and then transferred to the acceptor end of tRNA(Asp/Asn). This chain is Aspartate--tRNA(Asp/Asn) ligase, found in Persephonella marina (strain DSM 14350 / EX-H1).